We begin with the raw amino-acid sequence, 73 residues long: Omega-conotoxin GVIA (73 aa).

The signal sequence occupies residues 1–22 (MKLTCVVIVAVLLLTACQLITA). Positions 23–45 (DDSRGTQKHRALGSTTELSLSTR) are excised as a propeptide. Intrachain disulfides connect C46–C61, C53–C64, and C60–C71. P49, P55, and P66 each carry 4-hydroxyproline. At Y72 the chain carries Tyrosine amide; in form omega-conotoxin GVIA.

It belongs to the conotoxin O1 superfamily. Expressed by the venom duct.

It is found in the secreted. Its function is as follows. Omega-conotoxins act at presynaptic membranes, they bind and block voltage-gated calcium channels (Cav). This toxin blocks N-type calcium channels (Cav2.2/CACNA1B) with a high potency (it displaces [125I]GVIA with an IC(50)=3.7-38 pM). The sequence is that of Omega-conotoxin GVIA from Conus geographus (Geography cone).